The sequence spans 356 residues: Glycerol-3-phosphate dehydrogenase [NAD(P)+] (356 aa).

NADPH-binding residues include W12, R32, R33, and K117. Sn-glycerol 3-phosphate contacts are provided by K117, G151, and S153. NADPH is bound at residue A155. Residues K206, D265, R276, and N277 each coordinate sn-glycerol 3-phosphate. K206 functions as the Proton acceptor in the catalytic mechanism. NADPH is bound at residue R276. L309 and E311 together coordinate NADPH.

Belongs to the NAD-dependent glycerol-3-phosphate dehydrogenase family.

It is found in the cytoplasm. It carries out the reaction sn-glycerol 3-phosphate + NAD(+) = dihydroxyacetone phosphate + NADH + H(+). It catalyses the reaction sn-glycerol 3-phosphate + NADP(+) = dihydroxyacetone phosphate + NADPH + H(+). It participates in membrane lipid metabolism; glycerophospholipid metabolism. In terms of biological role, catalyzes the reduction of the glycolytic intermediate dihydroxyacetone phosphate (DHAP) to sn-glycerol 3-phosphate (G3P), the key precursor for phospholipid synthesis. This Treponema pallidum (strain Nichols) protein is Glycerol-3-phosphate dehydrogenase [NAD(P)+].